A 544-amino-acid polypeptide reads, in one-letter code: Serine/threonine-protein kinase PAK 1 (544 aa).

The tract at residues 1–79 is disordered; the sequence is MSNNGLDVQD…KERPEISLPS (79 aa). Position 2 is an N-acetylserine (Ser-2). Residue Ser-21 is modified to Phosphoserine; by PKB and autocatalysis. At Ser-57 the chain carries Phosphoserine; by autocatalysis. Residues 68–79 show a composition bias toward basic and acidic residues; that stretch reads KEKERPEISLPS. Positions 70–140 are autoregulatory region; it reads KERPEISLPS…YNSKKTSNSQ (71 aa). One can recognise a CRIB domain in the interval 75 to 88; sequence ISLPSDFEHTIHVG. The tract at residues 75–105 is GTPase-binding; sequence ISLPSDFEHTIHVGFDAVTGEFTGMPEQWAR. A Phosphothreonine; by OXSR1 modification is found at Thr-84. Ser-115 is modified (phosphoserine). Phosphotyrosine is present on residues Tyr-131 and Tyr-142. Residues Ser-144 and Ser-149 each carry the phosphoserine; by autocatalysis modification. Residues 150 to 166 show a composition bias toward polar residues; it reads AEDYNSSNTLNVKTVSE. Positions 150–195 are disordered; sequence AEDYNSSNTLNVKTVSETPAVPPVSEDEDDDDDATPPPVIAPRPEH. The residue at position 153 (Tyr-153) is a Phosphotyrosine; by JAK2. Ser-174 carries the post-translational modification Phosphoserine. The segment covering 174–183 has biased composition (acidic residues); sequence SEDEDDDDDA. A Phosphothreonine modification is found at Thr-184. Ser-198 is modified (phosphoserine; by autocatalysis). Tyr-200 carries the post-translational modification Phosphotyrosine; by JAK2. Ser-203 bears the Phosphoserine; by autocatalysis mark. The interval 209–250 is disordered; it reads PVTPTRDVATSPISPTENNTTPPDALTRNTEKQKKKPKMSDE. Thr-211 and Thr-218 each carry phosphothreonine. 2 positions are modified to phosphoserine: Ser-219 and Ser-222. Over residues 219–230 the composition is skewed to polar residues; it reads SPISPTENNTTP. Residues Thr-224, Thr-228, and Thr-229 each carry the phosphothreonine modification. Residues 269–520 enclose the Protein kinase domain; it reads YTRFEKIGQG…AKELLQHQFL (252 aa). 275–283 contacts ATP; it reads IGQGASGTV. Residue Tyr-284 is modified to Phosphotyrosine; by JAK2. Residue Lys-298 coordinates ATP. The active-site Proton acceptor is Asp-388. At Thr-422 the chain carries Phosphothreonine; by autocatalysis, BRSK2 and PDPK1.

This sequence belongs to the protein kinase superfamily. STE Ser/Thr protein kinase family. STE20 subfamily. As to quaternary structure, homodimer in its autoinhibited state. Active as monomer. Interacts with GIT1. Component of cytoplasmic complexes, which also contains PXN, ARHGEF7 and GIT1. Interacts with NISCH. Interacts with DVL1; mediates the formation of a DVL1, MUSK and PAK1 ternary complex involved in AChR clustering. Binds to the caspase-cleaved p110 isoform of CDC2L1 and CDC2L2, p110C, but not the full-length proteins. Interacts with ARHGEF7. Interacts with SCRIB. Interacts with PDPK1. Interacts (via kinase domain) with RAF1. Interacts with NCK1 and NCK2. Interacts with TBCB. Interacts with BRSK2. Interacts tightly with GTP-bound but not GDP-bound CDC42/P21 and RAC1. Interacts with SNAI1. Interacts with CIB1 (via N-terminal region); the interaction is direct, promotes PAK1 activity and occurs in a calcium-dependent manner. Interacts with INPP5K. Interacts with gamma-tubulin. Interacts with RHOU; the interaction promotes PAK1 activation. It depends on Mg(2+) as a cofactor. Post-translationally, autophosphorylated in trans, meaning that in a dimer, one kinase molecule phosphorylates the other one. Activated by autophosphorylation at Thr-422 in response to a conformation change, triggered by interaction with GTP-bound CDC42 or RAC1. Activated by phosphorylation at Thr-422 by PDPK1. Phosphorylated by JAK2 in response to PRL; this increases PAK1 kinase activity. Phosphorylated at Ser-21 by PKB/AKT; this reduces interaction with NCK1 and association with focal adhesion sites. Activated by phosphorylation at Thr-422 by BRSK2. Upon DNA damage, phosphorylated at Thr-211 and translocates to the nucleoplasm. Phosphorylated at tyrosine residues, which can be enhanced by NTN1. Expressed predominantly in the brain, with higher expression in neuronal groups associated with motor function, and at lower levels in the spleen.

Its subcellular location is the cytoplasm. The protein resides in the cell junction. It is found in the focal adhesion. The protein localises to the cell projection. It localises to the lamellipodium. Its subcellular location is the cell membrane. The protein resides in the ruffle membrane. It is found in the invadopodium. The protein localises to the nucleus. It localises to the nucleoplasm. Its subcellular location is the chromosome. The protein resides in the cytoskeleton. It is found in the microtubule organizing center. The protein localises to the centrosome. It catalyses the reaction L-seryl-[protein] + ATP = O-phospho-L-seryl-[protein] + ADP + H(+). The enzyme catalyses L-threonyl-[protein] + ATP = O-phospho-L-threonyl-[protein] + ADP + H(+). Its activity is regulated as follows. Phosphorylation of Thr-84 by OXSR1 inhibits activation. Activated by binding small G proteins. Binding of GTP-bound CDC42 or RAC1 to the autoregulatory region releases monomers from the autoinhibited dimer, and enables activation by phosphorylation of Thr-422. Protein kinase involved in intracellular signaling pathways downstream of integrins and receptor-type kinases that plays an important role in cytoskeleton dynamics, in cell adhesion, migration, proliferation, apoptosis, mitosis, and in vesicle-mediated transport processes. Can directly phosphorylate BAD and protects cells against apoptosis. Activated by interaction with CDC42 and RAC1. Functions as a GTPase effector that links the Rho-related GTPases CDC42 and RAC1 to the JNK MAP kinase pathway. Phosphorylates and activates MAP2K1, and thereby mediates activation of downstream MAP kinases. Involved in the reorganization of the actin cytoskeleton, actin stress fibers and of focal adhesion complexes. Phosphorylates the tubulin chaperone TBCB and thereby plays a role in the regulation of microtubule biogenesis and organization of the tubulin cytoskeleton. Plays a role in the regulation of insulin secretion in response to elevated glucose levels. Part of a ternary complex that contains PAK1, DVL1 and MUSK that is important for MUSK-dependent regulation of AChR clustering during the formation of the neuromuscular junction (NMJ). Activity is inhibited in cells undergoing apoptosis, potentially due to binding of CDC2L1 and CDC2L2. Phosphorylates MYL9/MLC2. Phosphorylates RAF1 at 'Ser-338' and 'Ser-339' resulting in: activation of RAF1, stimulation of RAF1 translocation to mitochondria, phosphorylation of BAD by RAF1, and RAF1 binding to BCL2. Phosphorylates SNAI1 at 'Ser-246' promoting its transcriptional repressor activity by increasing its accumulation in the nucleus. In podocytes, promotes NR3C2 nuclear localization. Required for atypical chemokine receptor ACKR2-induced phosphorylation of LIMK1 and cofilin (CFL1) and for the up-regulation of ACKR2 from endosomal compartment to cell membrane, increasing its efficiency in chemokine uptake and degradation. In synapses, seems to mediate the regulation of F-actin cluster formation performed by SHANK3, maybe through CFL1 phosphorylation and inactivation. Plays a role in RUFY3-mediated facilitating gastric cancer cells migration and invasion. In response to DNA damage, phosphorylates MORC2 which activates its ATPase activity and facilitates chromatin remodeling. In neurons, plays a crucial role in regulating GABA(A) receptor synaptic stability and hence GABAergic inhibitory synaptic transmission through its role in F-actin stabilization. In hippocampal neurons, necessary for the formation of dendritic spines and excitatory synapses; this function is dependent on kinase activity and may be exerted by the regulation of actomyosin contractility through the phosphorylation of myosin II regulatory light chain (MLC). Along with GIT1, positively regulates microtubule nucleation during interphase. Phosphorylates FXR1, promoting its localization to stress granules and activity. Phosphorylates ILK on 'Thr-173' and 'Ser-246', promoting nuclear export of ILK. The chain is Serine/threonine-protein kinase PAK 1 from Rattus norvegicus (Rat).